Here is a 184-residue protein sequence, read N- to C-terminus: Small ribosomal subunit protein eS8 (184 aa).

Positions 1 to 23 (MGISRDSRHKRRLTGGRYPVHKK) are disordered. Over residues 7-23 (SRHKRRLTGGRYPVHKK) the composition is skewed to basic residues.

This sequence belongs to the eukaryotic ribosomal protein eS8 family.

The polypeptide is Small ribosomal subunit protein eS8 (RPS8) (Theileria annulata).